Consider the following 208-residue polypeptide: Flavin-dependent thymidylate synthase (208 aa).

Residues 1–208 form the ThyX domain; the sequence is MEVICKHYTP…QYLFEDCLKH (208 aa). FAD is bound by residues serine 50 and 74 to 76; that span reads RHR. DUMP contacts are provided by residues 71–74, 84–86, and lysine 147; these read ELSR and SSR. Residues 74-84 carry the ThyX motif motif; sequence RHRIASLSVKS. Residues 163 to 165 and asparagine 169 contribute to the FAD site; that span reads NAR. Position 174 (arginine 174) interacts with dUMP. Arginine 174 acts as the Involved in ionization of N3 of dUMP, leading to its activation in catalysis.

The protein belongs to the thymidylate synthase ThyX family. Homotetramer. It depends on FAD as a cofactor.

The catalysed reaction is dUMP + (6R)-5,10-methylene-5,6,7,8-tetrahydrofolate + NADPH + H(+) = dTMP + (6S)-5,6,7,8-tetrahydrofolate + NADP(+). It functions in the pathway pyrimidine metabolism; dTTP biosynthesis. Its function is as follows. Catalyzes the reductive methylation of 2'-deoxyuridine-5'-monophosphate (dUMP) to 2'-deoxythymidine-5'-monophosphate (dTMP) while utilizing 5,10-methylenetetrahydrofolate (mTHF) as the methyl donor, and NAD(P)H and FADH(2) as the reductant. This Helicobacter pylori (strain ATCC 700392 / 26695) (Campylobacter pylori) protein is Flavin-dependent thymidylate synthase.